Consider the following 340-residue polypeptide: Fructose-1,6-bisphosphatase class 1 (340 aa).

Residues E107, D126, L128, and D129 each contribute to the Mg(2+) site. Residue N215 coordinates substrate. E287 contacts Mg(2+).

Belongs to the FBPase class 1 family. Homotetramer. The cofactor is Mg(2+).

Its subcellular location is the cytoplasm. It carries out the reaction beta-D-fructose 1,6-bisphosphate + H2O = beta-D-fructose 6-phosphate + phosphate. Its pathway is carbohydrate biosynthesis; gluconeogenesis. The protein is Fructose-1,6-bisphosphatase class 1 of Brucella suis (strain ATCC 23445 / NCTC 10510).